Consider the following 1413-residue polypeptide: ABC-type transporter vrcC (1413 aa).

The region spanning V108–E365 is the ABC transporter 1 domain. N-linked (GlcNAc...) asparagine glycosylation occurs at N289. Residues V476–Y496 form a helical membrane-spanning segment. N501 carries an N-linked (GlcNAc...) asparagine glycan. The next 2 helical transmembrane spans lie at A510 to L530 and V564 to G584. N675 carries an N-linked (GlcNAc...) asparagine glycan. Residues I683 to F703 traverse the membrane as a helical segment. The tract at residues S725–R748 is disordered. N738 carries N-linked (GlcNAc...) asparagine glycosylation. Positions A739 to R748 are enriched in basic and acidic residues. In terms of domain architecture, ABC transporter 2 spans F761–G1003. Helical transmembrane passes span I1105 to L1125, I1142 to T1162, L1191 to M1211, L1230 to L1250, L1266 to F1286, and V1290 to V1310. Residue N1324 is glycosylated (N-linked (GlcNAc...) asparagine). Residues F1378–W1398 traverse the membrane as a helical segment.

Belongs to the ABC transporter superfamily. ABCG family. PDR (TC 3.A.1.205) subfamily.

It is found in the cell membrane. In terms of biological role, ABC-type transporter; part of the gene cluster that mediates the biosynthesis of the sesterterpene variecolin. VrcC is probably involved in the secretion of variecolin. This Aspergillus aculeatus (strain ATCC 16872 / CBS 172.66 / WB 5094) protein is ABC-type transporter vrcC.